A 502-amino-acid chain; its full sequence is Cytochrome P450 71B16 (502 aa).

Residues 1–21 (MAISLLCLFLITLVSLIFVVK) traverse the membrane as a helical segment. Cysteine 444 contacts heme.

It belongs to the cytochrome P450 family. It depends on heme as a cofactor.

The protein localises to the membrane. This Arabidopsis thaliana (Mouse-ear cress) protein is Cytochrome P450 71B16 (CYP71B16).